The chain runs to 237 residues: Urease accessory protein UreF (237 aa).

This sequence belongs to the UreF family. As to quaternary structure, ureD, UreF and UreG form a complex that acts as a GTP-hydrolysis-dependent molecular chaperone, activating the urease apoprotein by helping to assemble the nickel containing metallocenter of UreC. The UreE protein probably delivers the nickel.

Its subcellular location is the cytoplasm. Its function is as follows. Required for maturation of urease via the functional incorporation of the urease nickel metallocenter. The sequence is that of Urease accessory protein UreF from Methylibium petroleiphilum (strain ATCC BAA-1232 / LMG 22953 / PM1).